A 207-amino-acid chain; its full sequence is dTTP/UTP pyrophosphatase (207 aa).

Asp86 (proton acceptor) is an active-site residue.

This sequence belongs to the Maf family. YhdE subfamily. Requires a divalent metal cation as cofactor.

It localises to the cytoplasm. The enzyme catalyses dTTP + H2O = dTMP + diphosphate + H(+). The catalysed reaction is UTP + H2O = UMP + diphosphate + H(+). Nucleoside triphosphate pyrophosphatase that hydrolyzes dTTP and UTP. May have a dual role in cell division arrest and in preventing the incorporation of modified nucleotides into cellular nucleic acids. The chain is dTTP/UTP pyrophosphatase from Nitrosospira multiformis (strain ATCC 25196 / NCIMB 11849 / C 71).